We begin with the raw amino-acid sequence, 313 residues long: Homoserine O-succinyltransferase (313 aa).

Cys142 acts as the Acyl-thioester intermediate in catalysis. Substrate is bound by residues Lys163 and Ser192. His235 acts as the Proton acceptor in catalysis. Residue Glu237 is part of the active site. A substrate-binding site is contributed by Arg249.

The protein belongs to the MetA family.

The protein resides in the cytoplasm. It carries out the reaction L-homoserine + succinyl-CoA = O-succinyl-L-homoserine + CoA. Its pathway is amino-acid biosynthesis; L-methionine biosynthesis via de novo pathway; O-succinyl-L-homoserine from L-homoserine: step 1/1. Transfers a succinyl group from succinyl-CoA to L-homoserine, forming succinyl-L-homoserine. The chain is Homoserine O-succinyltransferase from Vibrio vulnificus (strain YJ016).